The chain runs to 215 residues: Cytochrome b6 (215 aa).

A helical transmembrane segment spans residues 32–52 (IFYCLGGITLTCFLVQVATGF). C35 is a binding site for heme c. Residues H86 and H100 each contribute to the heme b site. Transmembrane regions (helical) follow at residues 90 to 110 (ASMM…TGGF), 116 to 136 (LTWV…VTGY), and 186 to 206 (LHTF…FLMI). Heme b is bound by residues H187 and H202.

It belongs to the cytochrome b family. PetB subfamily. As to quaternary structure, the 4 large subunits of the cytochrome b6-f complex are cytochrome b6, subunit IV (17 kDa polypeptide, PetD), cytochrome f and the Rieske protein, while the 4 small subunits are PetG, PetL, PetM and PetN. The complex functions as a dimer. Requires heme b as cofactor. It depends on heme c as a cofactor.

The protein localises to the plastid. The protein resides in the chloroplast thylakoid membrane. Its function is as follows. Component of the cytochrome b6-f complex, which mediates electron transfer between photosystem II (PSII) and photosystem I (PSI), cyclic electron flow around PSI, and state transitions. In Pisum sativum (Garden pea), this protein is Cytochrome b6.